We begin with the raw amino-acid sequence, 361 residues long: Chorismate synthase (361 aa).

The NADP(+) site is built by Arg48 and Arg54. FMN-binding positions include 125–127 (RSS), 238–239 (NA), Gly278, 293–297 (KPTSS), and Arg319.

Belongs to the chorismate synthase family. As to quaternary structure, homotetramer. The cofactor is FMNH2.

The enzyme catalyses 5-O-(1-carboxyvinyl)-3-phosphoshikimate = chorismate + phosphate. The protein operates within metabolic intermediate biosynthesis; chorismate biosynthesis; chorismate from D-erythrose 4-phosphate and phosphoenolpyruvate: step 7/7. Functionally, catalyzes the anti-1,4-elimination of the C-3 phosphate and the C-6 proR hydrogen from 5-enolpyruvylshikimate-3-phosphate (EPSP) to yield chorismate, which is the branch point compound that serves as the starting substrate for the three terminal pathways of aromatic amino acid biosynthesis. This reaction introduces a second double bond into the aromatic ring system. The chain is Chorismate synthase from Klebsiella pneumoniae (strain 342).